The chain runs to 1332 residues: SAGA complex subunit SPT7 (1332 aa).

Threonine 78 is modified (phosphothreonine; by ATM or ATR). 3 disordered regions span residues 80-118 (EEEH…ISNE), 209-268 (VEEK…ISSS), and 331-384 (IEKG…PKQS). Serine 88 carries the post-translational modification Phosphoserine. A compositionally biased stretch (low complexity) spans 106 to 118 (NNNTNTNTSISNE). Residues 217-233 (IGKNEKPQNKEGISKFA) show a composition bias toward basic and acidic residues. Over residues 234 to 249 (EDEDYDDEDENYDEDS) the composition is skewed to acidic residues. Residues 250–260 (TDVKNVDDPPK) show a composition bias toward basic and acidic residues. Acidic residues predominate over residues 345–360 (AATDEQDRENTNDEPD). Residues 362 to 376 (NQKLPTPEGSTFSDT) are compositionally biased toward polar residues. In terms of domain architecture, Bromo spans 440–546 (IGQEELYEAC…KKSLQLIRMI (107 aa)). A compositionally biased stretch (acidic residues) spans 566–578 (KDKDYELDEEEEV). 2 disordered regions span residues 566–724 (KDKD…YLLE) and 1286–1332 (GAEN…RLNQ). Basic and acidic residues-rich tracts occupy residues 593–634 (LAKE…KDKT) and 644–697 (NVNK…KEAG). Positions 698–716 (ENNEEEEDDDDEDEDEDMV) are enriched in acidic residues. A Phosphoserine modification is found at serine 1293. The segment covering 1316–1332 (NMGSNSSFSLSLPRLNQ) has biased composition (polar residues).

In terms of assembly, component of the 1.8 MDa SAGA (Spt-Ada-Gcn5 acetyltransferase) complex, which is composed of 19 subunits TRA1, SPT7, TAF5, NGG1/ADA3, SGF73, SPT20/ADA5, SPT8, TAF12, TAF6, HFI1/ADA1, UBP8, GCN5, ADA2, SPT3, SGF29, TAF10, TAF9, SGF11 and SUS1. The SAGA complex is composed of 4 modules, namely the HAT (histone acetyltransferase) module (GCN5, ADA2, NGG1/ADA3 and SGF29), the DUB (deubiquitinating) module (UBP8, SGF11, SGF73 and SUS1), the core or TAF (TBP-associated factor) module (TAF5, TAF6, TAF9, TAF10 and TAF12), and the Tra1 or SPT (Suppressor of Ty) module (TRA1, HFI1/ADA1, SPT3, SPT7, SPT8 and SPT20/ADA5). The Tra1/SPT module binds activators, the core module recruits TBP (TATA-binding protein), the HAT module contains the histone H3 acetyltransferase GCN5, and the DUB module comprises the histone H2B deubiquitinase UBP8. Also identified in an altered form of SAGA, named SALSA (SAGA altered, Spt8 absent) or SLIK (SAGA-like) complex, which contains a C-terminal truncated form of SPT7 and is missing SPT8. However, it has been shown that the SAGA and SAGA-like SALSA/SLIK transcriptional coactivators are structurally and biochemically equivalent. Identified in the Ada.spt complex with NGG1/ADA3 and TRA1. Protease PEP4 directly cleaves the C-terminus of SPT7(SAGA) to form SPT7(SLIK) within the SAGA complex in the nucleus.

Its subcellular location is the nucleus. Its function is as follows. Component of the transcription coactivator SAGA complex. SAGA acts as a general cofactor required for essentially all RNA polymerase II transcription. At the promoters, SAGA is required for transcription pre-initiation complex (PIC) recruitment. It influences RNA polymerase II transcriptional activity through different activities such as TBP interaction (via core/TAF module) and promoter selectivity, interaction with transcription activators (via Tra1/SPT module), and chromatin modification through histone acetylation (via HAT module) and deubiquitination (via DUB module). SAGA preferentially acetylates histones H3 (to form H3K9ac, H3K14ac, H3K18ac and H3K23ac) and H2B and deubiquitinates histone H2B. SAGA interacts with DNA via upstream activating sequences (UASs). Also identified in a modified version of SAGA named SALSA or SLIK. The cleavage of SPT7 and the absence of the SPT8 subunit in SLIK neither drive any major conformational differences in its structure compared with SAGA, nor significantly affect HAT, DUB, or DNA-binding activities. This Saccharomyces cerevisiae (strain ATCC 204508 / S288c) (Baker's yeast) protein is SAGA complex subunit SPT7 (SPT7).